The sequence spans 379 residues: Queuine tRNA-ribosyltransferase (379 aa).

D94 (proton acceptor) is an active-site residue. Substrate contacts are provided by residues 94–98 (DSGGF), D148, Q191, and G218. An RNA binding region spans residues 249-255 (GVGSPDA). The active-site Nucleophile is the D268. Residues 273–277 (TRIAR) form an RNA binding; important for wobble base 34 recognition region. Zn(2+)-binding residues include C306, C308, C311, and H337.

Belongs to the queuine tRNA-ribosyltransferase family. As to quaternary structure, homodimer. Within each dimer, one monomer is responsible for RNA recognition and catalysis, while the other monomer binds to the replacement base PreQ1. The cofactor is Zn(2+).

It carries out the reaction 7-aminomethyl-7-carbaguanine + guanosine(34) in tRNA = 7-aminomethyl-7-carbaguanosine(34) in tRNA + guanine. The protein operates within tRNA modification; tRNA-queuosine biosynthesis. Functionally, catalyzes the base-exchange of a guanine (G) residue with the queuine precursor 7-aminomethyl-7-deazaguanine (PreQ1) at position 34 (anticodon wobble position) in tRNAs with GU(N) anticodons (tRNA-Asp, -Asn, -His and -Tyr). Catalysis occurs through a double-displacement mechanism. The nucleophile active site attacks the C1' of nucleotide 34 to detach the guanine base from the RNA, forming a covalent enzyme-RNA intermediate. The proton acceptor active site deprotonates the incoming PreQ1, allowing a nucleophilic attack on the C1' of the ribose to form the product. After dissociation, two additional enzymatic reactions on the tRNA convert PreQ1 to queuine (Q), resulting in the hypermodified nucleoside queuosine (7-(((4,5-cis-dihydroxy-2-cyclopenten-1-yl)amino)methyl)-7-deazaguanosine). The sequence is that of Queuine tRNA-ribosyltransferase from Macrococcus caseolyticus (strain JCSC5402) (Macrococcoides caseolyticum).